Reading from the N-terminus, the 102-residue chain is Small ribosomal subunit protein uS10 (102 aa).

The protein belongs to the universal ribosomal protein uS10 family. As to quaternary structure, part of the 30S ribosomal subunit.

Its function is as follows. Involved in the binding of tRNA to the ribosomes. The protein is Small ribosomal subunit protein uS10 of Listeria innocua serovar 6a (strain ATCC BAA-680 / CLIP 11262).